The sequence spans 717 residues: Probable E3 ubiquitin-protein ligase WAVH2 (717 aa).

Polar residues-rich tracts occupy residues 13–28 (VSSN…SLHT) and 85–94 (RTTSNATPRT). Residues 13 to 120 (VSSNQDKPQQ…SSSSSSSQGG (108 aa)) form a disordered region. Positions 95–117 (SNSSSPKFFSNPSSPKSSSSSSS) are enriched in low complexity. The RING-type; atypical zinc finger occupies 140 to 184 (CAICLQRVNSNQSNSTAAIFTAECSHSFHLSCVNGLEDKRCPFCS). The region spanning 326–456 (DLVTVLDLSN…LNATRIPFVV (131 aa)) is the VWFA domain.

As to expression, expressed in root tips, cotyledons, leaf primordia and hypocotyls.

It carries out the reaction S-ubiquitinyl-[E2 ubiquitin-conjugating enzyme]-L-cysteine + [acceptor protein]-L-lysine = [E2 ubiquitin-conjugating enzyme]-L-cysteine + N(6)-ubiquitinyl-[acceptor protein]-L-lysine.. Its function is as follows. Probable E3 ubiquitin-protein ligase involved in the regulation of root growth. Acts as a positive regulator of root gravitropism. The polypeptide is Probable E3 ubiquitin-protein ligase WAVH2 (Arabidopsis thaliana (Mouse-ear cress)).